The sequence spans 72 residues: Arrestin-E (72 aa).

Belongs to the arrestin family. As to expression, adrenal, cerebral cortex, heart, hypothalamus, intestine, liver, lung, pituitary, retina and testis.

The sequence is that of Arrestin-E (Ear) from Rattus norvegicus (Rat).